Reading from the N-terminus, the 347-residue chain is Ornithine transcarbamylase, mitochondrial (347 aa).

A mitochondrion-targeting transit peptide spans 1-25 (MINSISNTVLLKSVVSKRFFSSSAK). Carbamoyl phosphate-binding positions include 84 to 87 (STRT), Arg-135, His-162, and Gln-165. Residues Asn-194, Asp-258, Ser-262, and Met-263 each contribute to the L-ornithine site. Cys-300 serves as the catalytic Proton acceptor. Carbamoyl phosphate contacts are provided by residues 300 to 301 (CL) and Arg-328.

This sequence belongs to the aspartate/ornithine carbamoyltransferase superfamily. OTCase family.

The protein resides in the mitochondrion matrix. It carries out the reaction carbamoyl phosphate + L-ornithine = L-citrulline + phosphate + H(+). It functions in the pathway amino-acid biosynthesis; L-arginine biosynthesis; L-arginine from L-ornithine and carbamoyl phosphate: step 1/3. This is Ornithine transcarbamylase, mitochondrial (OTC) from Pachysolen tannophilus (Yeast).